A 146-amino-acid chain; its full sequence is Hemoglobin subunit beta (146 aa).

V1 carries the N-acetylvaline modification. Positions 2–146 (QLSGEEKAAV…VANALAHKYH (145 aa)) constitute a Globin domain. At S44 the chain carries Phosphoserine. K59 carries the post-translational modification N6-acetyllysine. H63 serves as a coordination point for heme b. N6-acetyllysine is present on K82. Heme b is bound at residue H92. At C93 the chain carries S-nitrosocysteine. N6-acetyllysine is present on K144.

It belongs to the globin family. As to quaternary structure, heterotetramer of two alpha chains and two beta chains. In terms of tissue distribution, red blood cells.

Functionally, involved in oxygen transport from the lung to the various peripheral tissues. In Equus caballus (Horse), this protein is Hemoglobin subunit beta (HBB).